The sequence spans 227 residues: Small ribosomal subunit protein uS3 (227 aa).

The 69-residue stretch at valine 39–arginine 107 folds into the KH type-2 domain.

The protein belongs to the universal ribosomal protein uS3 family. As to quaternary structure, part of the 30S ribosomal subunit. Forms a tight complex with proteins S10 and S14.

In terms of biological role, binds the lower part of the 30S subunit head. Binds mRNA in the 70S ribosome, positioning it for translation. The sequence is that of Small ribosomal subunit protein uS3 (rpsC) from Coxiella burnetii (strain RSA 493 / Nine Mile phase I).